The following is a 235-amino-acid chain: Octanoyltransferase (235 aa).

Residues Pro-59–Leu-235 form the BPL/LPL catalytic domain. Substrate is bound by residues Arg-101 to His-108, Ser-168 to Gly-170, and Gly-181 to Ser-183. Cys-199 acts as the Acyl-thioester intermediate in catalysis.

The protein belongs to the LipB family.

The protein localises to the cytoplasm. The catalysed reaction is octanoyl-[ACP] + L-lysyl-[protein] = N(6)-octanoyl-L-lysyl-[protein] + holo-[ACP] + H(+). It participates in protein modification; protein lipoylation via endogenous pathway; protein N(6)-(lipoyl)lysine from octanoyl-[acyl-carrier-protein]: step 1/2. Its function is as follows. Catalyzes the transfer of endogenously produced octanoic acid from octanoyl-acyl-carrier-protein onto the lipoyl domains of lipoate-dependent enzymes. Lipoyl-ACP can also act as a substrate although octanoyl-ACP is likely to be the physiological substrate. This chain is Octanoyltransferase, found in Prochlorococcus marinus (strain MIT 9211).